The primary structure comprises 213 residues: Orotidine 5'-phosphate decarboxylase (213 aa).

Residues D11, K33, 61 to 70 (DLKLADIPNT), S113, 166 to 176 (PGVGAQGGKAS), G189, and R190 contribute to the substrate site. K63 functions as the Proton donor in the catalytic mechanism.

It belongs to the OMP decarboxylase family. Type 1 subfamily. As to quaternary structure, homodimer.

It carries out the reaction orotidine 5'-phosphate + H(+) = UMP + CO2. It participates in pyrimidine metabolism; UMP biosynthesis via de novo pathway; UMP from orotate: step 2/2. Catalyzes the decarboxylation of orotidine 5'-monophosphate (OMP) to uridine 5'-monophosphate (UMP). The protein is Orotidine 5'-phosphate decarboxylase of Thermococcus kodakarensis (strain ATCC BAA-918 / JCM 12380 / KOD1) (Pyrococcus kodakaraensis (strain KOD1)).